A 20-amino-acid chain; its full sequence is Thylakoid lumenal 22 kDa protein (20 aa).

It is found in the plastid. The protein localises to the chloroplast thylakoid lumen. This Spinacia oleracea (Spinach) protein is Thylakoid lumenal 22 kDa protein.